We begin with the raw amino-acid sequence, 313 residues long: Porphobilinogen deaminase (313 aa).

At cysteine 242 the chain carries S-(dipyrrolylmethanemethyl)cysteine.

It belongs to the HMBS family. Monomer. It depends on dipyrromethane as a cofactor.

It catalyses the reaction 4 porphobilinogen + H2O = hydroxymethylbilane + 4 NH4(+). It functions in the pathway porphyrin-containing compound metabolism; protoporphyrin-IX biosynthesis; coproporphyrinogen-III from 5-aminolevulinate: step 2/4. Functionally, tetrapolymerization of the monopyrrole PBG into the hydroxymethylbilane pre-uroporphyrinogen in several discrete steps. This is Porphobilinogen deaminase from Escherichia fergusonii (strain ATCC 35469 / DSM 13698 / CCUG 18766 / IAM 14443 / JCM 21226 / LMG 7866 / NBRC 102419 / NCTC 12128 / CDC 0568-73).